The following is a 170-amino-acid chain: Adenine phosphoribosyltransferase (170 aa).

The protein belongs to the purine/pyrimidine phosphoribosyltransferase family. In terms of assembly, homodimer.

The protein localises to the cytoplasm. It catalyses the reaction AMP + diphosphate = 5-phospho-alpha-D-ribose 1-diphosphate + adenine. It participates in purine metabolism; AMP biosynthesis via salvage pathway; AMP from adenine: step 1/1. In terms of biological role, catalyzes a salvage reaction resulting in the formation of AMP, that is energically less costly than de novo synthesis. The sequence is that of Adenine phosphoribosyltransferase from Streptococcus suis (strain 98HAH33).